The sequence spans 196 residues: Translation initiation factor IF-3 (196 aa).

It belongs to the IF-3 family. In terms of assembly, monomer.

The protein localises to the cytoplasm. Functionally, IF-3 binds to the 30S ribosomal subunit and shifts the equilibrium between 70S ribosomes and their 50S and 30S subunits in favor of the free subunits, thus enhancing the availability of 30S subunits on which protein synthesis initiation begins. The protein is Translation initiation factor IF-3 of Wigglesworthia glossinidia brevipalpis.